The sequence spans 714 residues: Protein spire homolog 2 (714 aa).

The KIND domain maps to 22–203 (LSLEEVLKAY…RALFVETLEL (182 aa)). The tract at residues 136–162 (DSEDSGCGAADEGYGGPEEEEEAEGVP) is disordered. WH2 domains are found at residues 248-262 (QLMR…LKKV), 278-296 (PFEM…LRKV), and 342-359 (LHEK…LRPV). Serine 371, serine 440, serine 442, and serine 476 each carry phosphoserine. Residues 453 to 516 (VASGLQSATH…SSGDRPEASM (64 aa)) are disordered. Residues 486–496 (DQGTCPASVSD) show a composition bias toward polar residues. The spir-box stretch occupies residues 534–554 (LALTVEEVMDVRRVLVKAEME).

This sequence belongs to the spire family.

Its subcellular location is the cytoplasm. The protein localises to the cytoskeleton. The protein resides in the cytosol. It is found in the cell membrane. It localises to the cytoplasmic vesicle membrane. In terms of biological role, acts as an actin nucleation factor, remains associated with the slow-growing pointed end of the new filament. Involved in intracellular vesicle transport along actin fibers, providing a novel link between actin cytoskeleton dynamics and intracellular transport. Required for asymmetric spindle positioning and asymmetric cell division during meiosis. Required for normal formation of the cleavage furrow and for polar body extrusion during female germ cell meiosis. Also acts in the nucleus: together with SPIRE1 and SPIRE2, promotes assembly of nuclear actin filaments in response to DNA damage in order to facilitate movement of chromatin and repair factors after DNA damage. In Homo sapiens (Human), this protein is Protein spire homolog 2 (SPIRE2).